The chain runs to 20 residues: Succinate--CoA ligase [ADP-forming] subunit beta, mitochondrial (20 aa).

The ATP-grasp domain occupies 8–20; that stretch reads SMELLQEAGVSIP.

Belongs to the succinate/malate CoA ligase beta subunit family. ATP-specific subunit beta subfamily. Heterodimer of an alpha and a beta subunit. The beta subunit determines specificity for ATP. Interacts with ALAS2.

It is found in the mitochondrion. It carries out the reaction succinate + ATP + CoA = succinyl-CoA + ADP + phosphate. It functions in the pathway carbohydrate metabolism; tricarboxylic acid cycle; succinate from succinyl-CoA (ligase route): step 1/1. Its function is as follows. ATP-specific succinyl-CoA synthetase functions in the citric acid cycle (TCA), coupling the hydrolysis of succinyl-CoA to the synthesis of ATP and thus represents the only step of substrate-level phosphorylation in the TCA. The beta subunit provides nucleotide specificity of the enzyme and binds the substrate succinate, while the binding sites for coenzyme A and phosphate are found in the alpha subunit. The chain is Succinate--CoA ligase [ADP-forming] subunit beta, mitochondrial from Canis lupus familiaris (Dog).